A 676-amino-acid chain; its full sequence is MAGRSKKKGTSGAAKNYITRTRAVKKLQISLPDFRRLCIFKGIYPREPRNKKKVSKGSTAQTTFYYTKDIQYLLHEPLLAKFREHKSVAKKIGRALGRGEAGDAARLEKNLMPKVKLDHIIKERYPTFVDALRDLDDALSMLFLFANLPSSDHIPAKTIALCQRLTREFEHYVITSHALRKSFLSIKGIYYQATIQGQDILWLVPYRFVQRTGGDIDFRIMGTFVEFYTTLLGFVNYRLYTSVGLVYPPKFNAKSDEQGGELAAFQLEGKANATNGASNDHDDDVEINPEAQAKADKIAAMADDEDEQEVEMAEADAEDDDEEENTEGIDKFEPTAPDADILPQPQASSAEIASLFAPFTFYLAREVPRASLEFILKAFGCKRVGWDSILGDGAFTTNESDPNITHQIVDRPPLANGASAAGAEDAATPQVQWPHSTKPGRTYVQPQWVWDCINQGKLLRPDLYAPGAELPPHLSPWVKPKKGEYDPNLPLAAQQPDGEAEAFEDLADEDEDAFEVDDDEDMDAVADREGSVEVGEGMDVADSDDDDEDDSESDAEGGADGFAGFDDESEAESDISEGEAARLQHQRELEAEATGKKLDVKAPTKKEQNAAIRKKFDKKKRAEEEERDRQKMMLSNKKRKLLKRIEYGENKRDTESENLRRKRTRLEKAKAAAERA.

Positions 298 to 327 form a coiled coil; sequence IAAMADDEDEQEVEMAEADAEDDDEEENTE. Disordered regions lie at residues 298-338, 413-439, 478-502, and 515-676; these read IAAM…TAPD, PLAN…STKP, VKPK…EAEA, and EVDD…AERA. Acidic residues predominate over residues 302–327; sequence ADDEDEQEVEMAEADAEDDDEEENTE. In terms of domain architecture, BRCT spans 351–466; the sequence is EIASLFAPFT…KLLRPDLYAP (116 aa). Positions 415 to 427 are enriched in low complexity; that stretch reads ANGASAAGAEDAA. Composition is skewed to acidic residues over residues 515 to 524, 539 to 557, and 565 to 577; these read EVDDDEDMDA, DVAD…DAEG, and FDDE…DISE. A coiled-coil region spans residues 568–676; it reads ESEAESDISE…EKAKAAAERA (109 aa). 4 stretches are compositionally biased toward basic and acidic residues: residues 579–608, 620–631, 643–659, and 666–676; these read EAAR…KKEQ, KRAEEEERDRQK, KRIE…SENL, and LEKAKAAAERA.

It belongs to the pescadillo family. As to quaternary structure, component of the NOP7 complex, composed of ERB1, NOP7 and YTM1. The complex is held together by ERB1, which interacts with NOP7 via its N-terminal domain and with YTM1 via a high-affinity interaction between the seven-bladed beta-propeller domains of the 2 proteins. The NOP7 complex associates with the 66S pre-ribosome.

Its subcellular location is the nucleus. The protein resides in the nucleolus. It is found in the nucleoplasm. Its function is as follows. Component of the NOP7 complex, which is required for maturation of the 25S and 5.8S ribosomal RNAs and formation of the 60S ribosome. The protein is Pescadillo homolog of Phaeosphaeria nodorum (strain SN15 / ATCC MYA-4574 / FGSC 10173) (Glume blotch fungus).